Reading from the N-terminus, the 673-residue chain is Ion-translocating oxidoreductase complex subunit C (673 aa).

4Fe-4S ferredoxin-type domains follow at residues 368–397 (MGAP…QQLY) and 407–436 (KATA…VQYF). [4Fe-4S] cluster is bound by residues cysteine 377, cysteine 380, cysteine 383, cysteine 387, cysteine 416, cysteine 419, cysteine 422, and cysteine 426. Disordered regions lie at residues 534-553 (QARA…SGGA) and 563-653 (IARA…AAVA).

It belongs to the 4Fe4S bacterial-type ferredoxin family. RnfC subfamily. In terms of assembly, the complex is composed of six subunits: RsxA, RsxB, RsxC, RsxD, RsxE and RsxG. The cofactor is [4Fe-4S] cluster.

The protein resides in the cell inner membrane. Part of a membrane-bound complex that couples electron transfer with translocation of ions across the membrane. Required to maintain the reduced state of SoxR. This Salmonella gallinarum (strain 287/91 / NCTC 13346) protein is Ion-translocating oxidoreductase complex subunit C.